The sequence spans 316 residues: DMOA farnesyltransferase nvfB (316 aa).

9 helical membrane-spanning segments follow: residues 47–67, 71–91, 115–135, 139–159, 162–182, 191–211, 234–254, 258–278, and 294–314; these read VVGV…TILL, LILV…NDVI, WNAV…LSFL, CAIE…GKRF, FPQL…HSLG, PTFF…VVYS, IELL…AAGY, LGIP…LYFL, and KLAC…EYYL.

Belongs to the UbiA prenyltransferase family.

Its subcellular location is the membrane. It catalyses the reaction 3,5-dimethylorsellinate + (2E,6E)-farnesyl diphosphate = (3R)-3-farnesyl-6-hydroxy-2,3,5-trimethyl-4-oxocyclohexa-1,5-diene-1-carboxylate + diphosphate + H(+). Its pathway is secondary metabolite biosynthesis; terpenoid biosynthesis. In terms of biological role, DMOA farnesyltransferase; part of the gene cluster that mediates the biosynthesis of novofumigatonin, a heavily oxygenated meroterpenoid containing a unique orthoester moiety. The first step of the pathway is the synthesis of 3,5-dimethylorsellinic acid (DMOA) by the polyketide synthase nvfA via condensation of one acetyl-CoA starter unit with 3 malonyl-CoA units and 2 methylations. DMOA is then converted to farnesyl-DMOA by the farnesyltransferase nvfB. Epoxydation by FAD-dependent monooxygenase nvfK, followed by a protonation-initiated cyclization catalyzed by the terpene cyclase nvfL leads to the production of asnavolin H. The short chain dehydrogenase nvfC then as a 3-OH dehydrogenase of asnovolin H to yield chemesin D. There are two branches to synthesize asnovolin A from chemesin D. In one branch, chemesin D undergoes Baeyer-Villiger oxidation by nvfH, methylation by nvfJ, and enoyl reduction by the nvfM D enoylreductase that reduces the double bond between C-5'and C-6', to form respectively asnovolin I, asnovolin K, and asnovolin A. In the other branch, the methylation precedes the Baeyer-Villiger oxidation and the enoyl reduction to yield asnovolin A via the asnovolin J intermediate. Asnovolin A is further converted to fumigatonoid A by the Fe(II)/2-oxoglutarate-dependent dioxygenase nvfI that catalyzes an endoperoxidation reaction. The alpha/beta hydrolase nvfD then acts as an epimerase that converts fumigatonoid A to its C-5' epimer, which then undergoes spontaneous or nvfD-catalyzed lactonization. The following step utilizes the ketoreductase nvfG to produce fumigatonoid B. The dioxygenase nvfE further converts fumigatonoid B into fumigatonoid C. Finally the Fe(II)/2-oxoglutarate-dependent dioxygenase nvfF catalyzes two rounds of oxidation to transform fumigatonoid C into the end product, novofumigatonin A. The chain is DMOA farnesyltransferase nvfB from Aspergillus novofumigatus (strain IBT 16806).